A 138-amino-acid polypeptide reads, in one-letter code: Putative pre-16S rRNA nuclease (138 aa).

This sequence belongs to the YqgF nuclease family.

It is found in the cytoplasm. Its function is as follows. Could be a nuclease involved in processing of the 5'-end of pre-16S rRNA. In Clostridium beijerinckii (strain ATCC 51743 / NCIMB 8052) (Clostridium acetobutylicum), this protein is Putative pre-16S rRNA nuclease.